The primary structure comprises 179 residues: GTP-dependent dephospho-CoA kinase (179 aa).

Asp43, Val45, Asp62, Glu120, and Asp143 together coordinate GTP.

The protein belongs to the GTP-dependent DPCK family.

The enzyme catalyses 3'-dephospho-CoA + GTP = GDP + CoA + H(+). It participates in cofactor biosynthesis; coenzyme A biosynthesis. Functionally, catalyzes the GTP-dependent phosphorylation of the 3'-hydroxyl group of dephosphocoenzyme A to form coenzyme A (CoA). This is GTP-dependent dephospho-CoA kinase from Haloarcula marismortui (strain ATCC 43049 / DSM 3752 / JCM 8966 / VKM B-1809) (Halobacterium marismortui).